Consider the following 510-residue polypeptide: NAD(P)H-quinone oxidoreductase subunit 2 B, chloroplastic (510 aa).

Helical transmembrane passes span 24 to 44, 57 to 77, 99 to 119, 124 to 144, 149 to 169, 183 to 203, 227 to 247, 295 to 315, 323 to 343, 354 to 374, 395 to 415, 418 to 438, and 484 to 504; these read LLLFDGSLIVPECILIFGLIL, IPWLYFISSTSLVMSITALLF, IFQFLILLCSTLCIPLSVEYI, MAITEFLLFVLTATLGGMFLC, LITIFVAPECFSLCSYLLSGY, YLLMGGASSSILVHGFSWLYG, PGISIALIFITVGIGFKLSPA, WHLLLETLAILSMILGNLIAI, MLAYSSIGQIGYVIIGIIVGD, YMLFYISMNLGTFACIVLFGL, ALSLALCLLSLGGLPPLAGFF, LYLFWCGWQAGLYFLVLIGLL, and MIVCVIASTIPGISMNPIIAI.

Belongs to the complex I subunit 2 family. In terms of assembly, NDH is composed of at least 16 different subunits, 5 of which are encoded in the nucleus.

It localises to the plastid. It is found in the chloroplast thylakoid membrane. It catalyses the reaction a plastoquinone + NADH + (n+1) H(+)(in) = a plastoquinol + NAD(+) + n H(+)(out). The enzyme catalyses a plastoquinone + NADPH + (n+1) H(+)(in) = a plastoquinol + NADP(+) + n H(+)(out). NDH shuttles electrons from NAD(P)H:plastoquinone, via FMN and iron-sulfur (Fe-S) centers, to quinones in the photosynthetic chain and possibly in a chloroplast respiratory chain. The immediate electron acceptor for the enzyme in this species is believed to be plastoquinone. Couples the redox reaction to proton translocation, and thus conserves the redox energy in a proton gradient. The sequence is that of NAD(P)H-quinone oxidoreductase subunit 2 B, chloroplastic from Daucus carota (Wild carrot).